The sequence spans 479 residues: Ubiquinone biosynthesis monooxygenase COQ6, mitochondrial (479 aa).

A mitochondrion-targeting transit peptide spans 1-17 (MFFSKVMLTRRILVRGL).

It belongs to the UbiH/COQ6 family. As to quaternary structure, component of a multi-subunit COQ enzyme complex, composed of at least COQ3, COQ4, COQ5, COQ6, COQ7 and COQ9. The cofactor is FAD.

The protein localises to the mitochondrion inner membrane. The catalysed reaction is 4-hydroxy-3-(all-trans-hexaprenyl)benzoate + 2 reduced [2Fe-2S]-[ferredoxin] + O2 + 2 H(+) = 3,4-dihydroxy-5-(all-trans-hexaprenyl)benzoate + 2 oxidized [2Fe-2S]-[ferredoxin] + H2O. The enzyme catalyses 2-methoxy-6-(all-trans-hexaprenyl)phenol + 2 reduced [2Fe-2S]-[ferredoxin] + O2 + 2 H(+) = 2-methoxy-6-(all-trans-hexaprenyl)benzene-1,4-diol + 2 oxidized [2Fe-2S]-[ferredoxin] + H2O. It catalyses the reaction 4-amino-3-(all-trans-hexaprenyl)benzoate + 2 reduced [2Fe-2S]-[ferredoxin] + O2 + 2 H(+) = 4-amino-5-hydroxy-3-(all-trans-hexaprenyl)benzoate + 2 oxidized [2Fe-2S]-[ferredoxin] + H2O. It carries out the reaction 4-amino-5-hydroxy-3-(all-trans-hexaprenyl)benzoate + 4 reduced [2Fe-2S]-[ferredoxin] + O2 + 5 H(+) = 3,4-dihydroxy-5-(all-trans-hexaprenyl)benzoate + 4 oxidized [2Fe-2S]-[ferredoxin] + NH4(+) + H2O. Its pathway is cofactor biosynthesis; ubiquinone biosynthesis. Its function is as follows. FAD-dependent monooxygenase required for two non-consecutive steps during ubiquinone biosynthesis. Required for the C5-ring hydroxylation during ubiquinone biosynthesis by catalyzing the hydroxylation of 4-hydroxy-3-(all-trans-hexaprenyl)benzoic acid to 3,4-dihydroxy-5-(all-trans-hexaprenyl)benzoic acid. Also acts downstream of COQ4, for the C1-hydroxylation during ubiquinone biosynthesis by catalyzing the hydroxylation of 2-methoxy-6-(all-trans-hexaprenyl)phenol to 2-methoxy-6-(all-trans-hexaprenyl)benzene-1,4-diol. The electrons required for the hydroxylation reaction are funneled indirectly from NADPH via ferredoxin (YAH1) and ferredoxin reductase (ARH1) to COQ6. Can also convert 3-hexaprenyl-4-aminobenzoic acid (HAB), a COQ2-prenylated pABA, to DHHB in a two step process. HAB is first hydroxylated at C5 to yield 3-hexaprenyl-4-amino-5-hydroxybenzoic acid (HHAB) which is further deaminated at C4 by COQ6 to produce DHHB. In Saccharomyces cerevisiae (strain ATCC 204508 / S288c) (Baker's yeast), this protein is Ubiquinone biosynthesis monooxygenase COQ6, mitochondrial.